Consider the following 238-residue polypeptide: Ubiquinone biosynthesis O-methyltransferase (238 aa).

4 residues coordinate S-adenosyl-L-methionine: arginine 39, glycine 58, aspartate 79, and methionine 123.

It belongs to the methyltransferase superfamily. UbiG/COQ3 family.

The enzyme catalyses a 3-demethylubiquinol + S-adenosyl-L-methionine = a ubiquinol + S-adenosyl-L-homocysteine + H(+). The catalysed reaction is a 3-(all-trans-polyprenyl)benzene-1,2-diol + S-adenosyl-L-methionine = a 2-methoxy-6-(all-trans-polyprenyl)phenol + S-adenosyl-L-homocysteine + H(+). It participates in cofactor biosynthesis; ubiquinone biosynthesis. O-methyltransferase that catalyzes the 2 O-methylation steps in the ubiquinone biosynthetic pathway. The chain is Ubiquinone biosynthesis O-methyltransferase from Hahella chejuensis (strain KCTC 2396).